We begin with the raw amino-acid sequence, 445 residues long: Serine--tRNA ligase (445 aa).

Position 229–231 (229–231 (TAE)) interacts with L-serine. ATP-binding positions include 260 to 262 (RKE) and Val276. Residue Glu283 participates in L-serine binding. 347 to 350 (EVSS) serves as a coordination point for ATP. Ser383 contacts L-serine.

The protein belongs to the class-II aminoacyl-tRNA synthetase family. Type-1 seryl-tRNA synthetase subfamily. Homodimer. The tRNA molecule binds across the dimer.

The protein localises to the cytoplasm. The enzyme catalyses tRNA(Ser) + L-serine + ATP = L-seryl-tRNA(Ser) + AMP + diphosphate + H(+). It carries out the reaction tRNA(Sec) + L-serine + ATP = L-seryl-tRNA(Sec) + AMP + diphosphate + H(+). It functions in the pathway aminoacyl-tRNA biosynthesis; selenocysteinyl-tRNA(Sec) biosynthesis; L-seryl-tRNA(Sec) from L-serine and tRNA(Sec): step 1/1. Functionally, catalyzes the attachment of serine to tRNA(Ser). Is also able to aminoacylate tRNA(Sec) with serine, to form the misacylated tRNA L-seryl-tRNA(Sec), which will be further converted into selenocysteinyl-tRNA(Sec). The chain is Serine--tRNA ligase from Thermomicrobium roseum (strain ATCC 27502 / DSM 5159 / P-2).